Reading from the N-terminus, the 206-residue chain is Holliday junction branch migration complex subunit RuvA (206 aa).

Residues 1–63 (MIASLRGTVI…EDAMKLYGFI (63 aa)) are domain I. Positions 64-142 (DNESREMFSV…AFAAGVVDEG (79 aa)) are domain II. The flexible linker stretch occupies residues 143-153 (GEQISLPNANI). Residues 154–206 (ASEVVVEQVSQALVGLGFSEKQSDDAVSFVLAADPSLDTSGALRAALAKLSGK) are domain III.

Belongs to the RuvA family. In terms of assembly, homotetramer. Forms an RuvA(8)-RuvB(12)-Holliday junction (HJ) complex. HJ DNA is sandwiched between 2 RuvA tetramers; dsDNA enters through RuvA and exits via RuvB. An RuvB hexamer assembles on each DNA strand where it exits the tetramer. Each RuvB hexamer is contacted by two RuvA subunits (via domain III) on 2 adjacent RuvB subunits; this complex drives branch migration. In the full resolvosome a probable DNA-RuvA(4)-RuvB(12)-RuvC(2) complex forms which resolves the HJ.

Its subcellular location is the cytoplasm. Functionally, the RuvA-RuvB-RuvC complex processes Holliday junction (HJ) DNA during genetic recombination and DNA repair, while the RuvA-RuvB complex plays an important role in the rescue of blocked DNA replication forks via replication fork reversal (RFR). RuvA specifically binds to HJ cruciform DNA, conferring on it an open structure. The RuvB hexamer acts as an ATP-dependent pump, pulling dsDNA into and through the RuvAB complex. HJ branch migration allows RuvC to scan DNA until it finds its consensus sequence, where it cleaves and resolves the cruciform DNA. This is Holliday junction branch migration complex subunit RuvA from Corynebacterium glutamicum (strain ATCC 13032 / DSM 20300 / JCM 1318 / BCRC 11384 / CCUG 27702 / LMG 3730 / NBRC 12168 / NCIMB 10025 / NRRL B-2784 / 534).